A 206-amino-acid chain; its full sequence is Large ribosomal subunit protein uL4 (206 aa).

Residues G46–S78 form a disordered region. Basic residues predominate over residues H58 to G70.

This sequence belongs to the universal ribosomal protein uL4 family. In terms of assembly, part of the 50S ribosomal subunit.

Its function is as follows. One of the primary rRNA binding proteins, this protein initially binds near the 5'-end of the 23S rRNA. It is important during the early stages of 50S assembly. It makes multiple contacts with different domains of the 23S rRNA in the assembled 50S subunit and ribosome. In terms of biological role, forms part of the polypeptide exit tunnel. The chain is Large ribosomal subunit protein uL4 from Burkholderia cenocepacia (strain ATCC BAA-245 / DSM 16553 / LMG 16656 / NCTC 13227 / J2315 / CF5610) (Burkholderia cepacia (strain J2315)).